The following is a 396-amino-acid chain: SSTETPPSYNQLNYNENLLRFFNSKPVTAPVELDPPKVESSYVSSARGEDARSTLSPVQGFEGSGGSGSSGNFTTGSNLHMSSVTNTSNAGTGTSGTGNSGDGGGGGGANGTGSGAAPPVTLTESLLNKHNDEMEKFMLKKHRESRGRSGEKNKKSANEAMKMLEYSGPGPGHGHGIKRGGSHSWEGEANKPKQQLTLNTIGGGGGGGVGGGMPLFLDITHASSSSQNKGLAGVGVGGAGGVVGGGGSGTGLGGNGNVGSGNGNNNQPSTNQYTQSRLPCTQNINLWPPFSVGITTPTSVLSSHTAVPPSSFSPQHSLFPTFYYIPASIAASSPSSTNTNPNRPHKHAHVHNSSEKPSTSQAAAATMPLQYMTGVMYPHPSLFYTHPAAAAATAMV.

Disordered regions lie at residues 27–120 (VTAP…APPV), 167–188 (SGPG…WEGE), 253–275 (GGNG…QYTQ), and 333–362 (SPSS…TSQA). The span at 93–114 (GTSGTGNSGDGGGGGGANGTGS) shows a compositional bias: gly residues. Residues 253 to 262 (GGNGNVGSGN) are compositionally biased toward gly residues. Positions 333 to 342 (SPSSTNTNPN) are enriched in low complexity.

As to quaternary structure, forms a heterodimer with timeless (TIM); the complex then translocates into the nucleus. Phosphorylated with a circadian rhythmicity, probably by the double-time protein (dbt). Phosphorylation could be implicated in the stability of per monomer and in the formation of heterodimer per-tim.

Its subcellular location is the nucleus. The protein localises to the cytoplasm. It is found in the perinuclear region. Essential for biological clock functions. Determines the period length of circadian and ultradian rhythms; an increase in PER dosage leads to shortened circadian rhythms and a decrease leads to lengthened circadian rhythms. Essential for the circadian rhythmicity of locomotor activity, eclosion behavior, and for the rhythmic component of the male courtship song that originates in the thoracic nervous system. The biological cycle depends on the rhythmic formation and nuclear localization of the TIM-PER complex. Light induces the degradation of TIM, which promotes elimination of PER. Nuclear activity of the heterodimer coordinatively regulates PER and TIM transcription through a negative feedback loop. Behaves as a negative element in circadian transcriptional loop. Does not appear to bind DNA, suggesting indirect transcriptional inhibition. The sequence is that of Period circadian protein (per) from Drosophila paulistorum (Fruit fly).